Consider the following 396-residue polypeptide: Ribosomal RNA large subunit methyltransferase I (396 aa).

Positions 2–79 (AIRIKLKPGR…REEEIDREFF (78 aa)) constitute a PUA domain.

Belongs to the methyltransferase superfamily. RlmI family.

The protein localises to the cytoplasm. The catalysed reaction is cytidine(1962) in 23S rRNA + S-adenosyl-L-methionine = 5-methylcytidine(1962) in 23S rRNA + S-adenosyl-L-homocysteine + H(+). Functionally, specifically methylates the cytosine at position 1962 (m5C1962) of 23S rRNA. In Shewanella oneidensis (strain ATCC 700550 / JCM 31522 / CIP 106686 / LMG 19005 / NCIMB 14063 / MR-1), this protein is Ribosomal RNA large subunit methyltransferase I.